The primary structure comprises 162 residues: 2-C-methyl-D-erythritol 2,4-cyclodiphosphate synthase (162 aa).

Positions 10 and 12 each coordinate a divalent metal cation. 4-CDP-2-C-methyl-D-erythritol 2-phosphate-binding positions include Asp10–His12 and His36–Ser37. A divalent metal cation is bound at residue His44. Residues Asp58 to Gly60, Phe63 to Asp67, Ala102 to Ala108, Thr134 to Glu137, Phe141, and Arg144 each bind 4-CDP-2-C-methyl-D-erythritol 2-phosphate.

It belongs to the IspF family. As to quaternary structure, homotrimer. A divalent metal cation serves as cofactor.

It carries out the reaction 4-CDP-2-C-methyl-D-erythritol 2-phosphate = 2-C-methyl-D-erythritol 2,4-cyclic diphosphate + CMP. It participates in isoprenoid biosynthesis; isopentenyl diphosphate biosynthesis via DXP pathway; isopentenyl diphosphate from 1-deoxy-D-xylulose 5-phosphate: step 4/6. Its function is as follows. Involved in the biosynthesis of isopentenyl diphosphate (IPP) and dimethylallyl diphosphate (DMAPP), two major building blocks of isoprenoid compounds. Catalyzes the conversion of 4-diphosphocytidyl-2-C-methyl-D-erythritol 2-phosphate (CDP-ME2P) to 2-C-methyl-D-erythritol 2,4-cyclodiphosphate (ME-CPP) with a corresponding release of cytidine 5-monophosphate (CMP). This Pseudoalteromonas atlantica (strain T6c / ATCC BAA-1087) protein is 2-C-methyl-D-erythritol 2,4-cyclodiphosphate synthase.